A 128-amino-acid polypeptide reads, in one-letter code: C-C motif chemokine 28 (128 aa).

A signal peptide spans 1–24 (MQQTGLTLALVALAVCVALPSSEA). 2 disulfide bridges follow: cysteine 32-cysteine 60 and cysteine 33-cysteine 75. Residues 89-128 (EQAAKKNTKGNICHKKQAGKRKSKGAHQEKPEIHSHKSPY) are disordered. Positions 94-113 (KNTKGNICHKKQAGKRKSKG) are enriched in basic residues. Residues 114–128 (AHQEKPEIHSHKSPY) show a composition bias toward basic and acidic residues.

It belongs to the intercrine beta (chemokine CC) family.

Its subcellular location is the secreted. Its function is as follows. Chemotactic activity for resting CD4, CD8 T-cells and eosinophils. Binds to CCR3 and CCR10 and induces calcium mobilization in a dose-dependent manner. This Canis lupus familiaris (Dog) protein is C-C motif chemokine 28 (CCL28).